Here is a 28-residue protein sequence, read N- to C-terminus: Odorant-binding protein 1 (28 aa).

This sequence belongs to the calycin superfamily. Lipocalin family. Nasal mucosa.

It is found in the secreted. It localises to the extracellular space. In terms of biological role, this soluble protein may play a specific role in odor discrimination and perception. In Hystrix cristata (North African crested porcupine), this protein is Odorant-binding protein 1.